We begin with the raw amino-acid sequence, 57 residues long: Large ribosomal subunit protein bL32 (57 aa).

A disordered region spans residues 1–38; sequence MAVQQNKPTRSKRGMRRSHDALTAVTSLSVDQTSGEKH. Residues 24–33 are compositionally biased toward polar residues; that stretch reads AVTSLSVDQT.

It belongs to the bacterial ribosomal protein bL32 family.

The protein is Large ribosomal subunit protein bL32 of Enterobacter sp. (strain 638).